Consider the following 250-residue polypeptide: Flagellar L-ring protein (250 aa).

An N-terminal signal peptide occupies residues 1 to 32 (MTRINTNTQKNNNTKFSKLILGVMVSSIVLSG). Cys33 is lipidated: N-palmitoyl cysteine. Residue Cys33 is the site of S-diacylglycerol cysteine attachment.

Belongs to the FlgH family. In terms of assembly, the basal body constitutes a major portion of the flagellar organelle and consists of four rings (L,P,S, and M) mounted on a central rod.

It is found in the cell outer membrane. It localises to the bacterial flagellum basal body. Its function is as follows. Assembles around the rod to form the L-ring and probably protects the motor/basal body from shearing forces during rotation. This Hydrogenovibrio crunogenus (strain DSM 25203 / XCL-2) (Thiomicrospira crunogena) protein is Flagellar L-ring protein.